Here is a 205-residue protein sequence, read N- to C-terminus: Holliday junction branch migration complex subunit RuvA (205 aa).

The interval 1–62 (MFEYVTGYVE…EDIMALYGFK (62 aa)) is domain I. The domain II stretch occupies residues 63–141 (TREERLLFTK…DVVPDAFVDL (79 aa)). Residues 142-152 (FSDEERFDEKK) form a flexible linker region. Positions 153-205 (GSSAELDEALEALRALGYAEREVSRVVPELLKESLTTDQYIKKALSLLLNGKR) are domain III.

Belongs to the RuvA family. Homotetramer. Forms an RuvA(8)-RuvB(12)-Holliday junction (HJ) complex. HJ DNA is sandwiched between 2 RuvA tetramers; dsDNA enters through RuvA and exits via RuvB. An RuvB hexamer assembles on each DNA strand where it exits the tetramer. Each RuvB hexamer is contacted by two RuvA subunits (via domain III) on 2 adjacent RuvB subunits; this complex drives branch migration. In the full resolvosome a probable DNA-RuvA(4)-RuvB(12)-RuvC(2) complex forms which resolves the HJ.

It is found in the cytoplasm. Functionally, the RuvA-RuvB-RuvC complex processes Holliday junction (HJ) DNA during genetic recombination and DNA repair, while the RuvA-RuvB complex plays an important role in the rescue of blocked DNA replication forks via replication fork reversal (RFR). RuvA specifically binds to HJ cruciform DNA, conferring on it an open structure. The RuvB hexamer acts as an ATP-dependent pump, pulling dsDNA into and through the RuvAB complex. HJ branch migration allows RuvC to scan DNA until it finds its consensus sequence, where it cleaves and resolves the cruciform DNA. The sequence is that of Holliday junction branch migration complex subunit RuvA from Bacillus cereus (strain AH187).